The sequence spans 601 residues: Glutathione-regulated potassium-efflux system protein KefB (601 aa).

13 helical membrane-spanning segments follow: residues 4 to 24, 29 to 49, 55 to 75, 87 to 107, 111 to 131, 152 to 172, 177 to 197, 207 to 227, 230 to 250, 262 to 282, 284 to 304, 324 to 344, and 356 to 376; these read ADLL…VPLA, IGAV…GLGF, EILH…GLEL, IFGV…GLLM, FLWQ…TAMA, VLLF…LLAG, HFDW…LIGG, FIAA…LVLS, LFMD…GVLL, AIDP…GMSL, LGVL…LVVI, MQFA…FSTA, and ALLL…MKGI. In terms of domain architecture, RCK N-terminal spans 400–519; the sequence is KPQVIVVGFG…AGVTQFSRET (120 aa).

This sequence belongs to the monovalent cation:proton antiporter 2 (CPA2) transporter (TC 2.A.37) family. KefB subfamily. In terms of assembly, interacts with the regulatory subunit KefG.

It localises to the cell inner membrane. Functionally, pore-forming subunit of a potassium efflux system that confers protection against electrophiles. Catalyzes K(+)/H(+) antiport. The sequence is that of Glutathione-regulated potassium-efflux system protein KefB from Salmonella paratyphi A (strain ATCC 9150 / SARB42).